Here is a 255-residue protein sequence, read N- to C-terminus: Phosphate import ATP-binding protein PstB (255 aa).

In terms of domain architecture, ABC transporter spans 9 to 250 (IAVQNLNFYY…PKIQRTEDYI (242 aa)). 41 to 48 (GPSGCGKS) provides a ligand contact to ATP.

This sequence belongs to the ABC transporter superfamily. Phosphate importer (TC 3.A.1.7) family. The complex is composed of two ATP-binding proteins (PstB), two transmembrane proteins (PstC and PstA) and a solute-binding protein (PstS).

Its subcellular location is the cell inner membrane. It carries out the reaction phosphate(out) + ATP + H2O = ADP + 2 phosphate(in) + H(+). Part of the ABC transporter complex PstSACB involved in phosphate import. Responsible for energy coupling to the transport system. In Haemophilus influenzae (strain 86-028NP), this protein is Phosphate import ATP-binding protein PstB.